Reading from the N-terminus, the 89-residue chain is Co-chaperonin GroES (89 aa).

It belongs to the GroES chaperonin family. Heptamer of 7 subunits arranged in a ring. Interacts with the chaperonin GroEL.

The protein resides in the cytoplasm. Functionally, together with the chaperonin GroEL, plays an essential role in assisting protein folding. The GroEL-GroES system forms a nano-cage that allows encapsulation of the non-native substrate proteins and provides a physical environment optimized to promote and accelerate protein folding. GroES binds to the apical surface of the GroEL ring, thereby capping the opening of the GroEL channel. The polypeptide is Co-chaperonin GroES (Porphyromonas gingivalis (strain ATCC 33277 / DSM 20709 / CIP 103683 / JCM 12257 / NCTC 11834 / 2561)).